The sequence spans 227 residues: tRNA pseudouridine synthase B (227 aa).

The Nucleophile role is filled by D42.

The protein belongs to the pseudouridine synthase TruB family. Type 1 subfamily.

It carries out the reaction uridine(55) in tRNA = pseudouridine(55) in tRNA. Its function is as follows. Responsible for synthesis of pseudouridine from uracil-55 in the psi GC loop of transfer RNAs. The protein is tRNA pseudouridine synthase B of Ureaplasma parvum serovar 3 (strain ATCC 27815 / 27 / NCTC 11736).